We begin with the raw amino-acid sequence, 251 residues long: MESGKMAPPKNAPRDALVMAQILKDMGITEYEPRVINQMLEFAFRYVTTILDDAKIYSSHAKKPNVDADDVRLAIQCRADQSFTSPPPRDFLLDIARQKNQTPLPLIKPYAGPRLPPDRYCLTAPNYRLKSLIKKGPNQGRLVPRLSVGAVSSKPTTPTIATPQTVSVPNKVATPMSVTSQRFTVQIPPSQSTPVKPVPATTAVQNVLINPSMIGPKNILITTNMVSSQNTANEANPLKRKHEDDDDNDIM.

Position 1 is an N-acetylmethionine (Met-1). Ser-147 carries the phosphoserine modification. Phosphothreonine is present on residues Thr-159 and Thr-174. Ser-177 bears the Phosphoserine mark. A disordered region spans residues 229 to 251 (QNTANEANPLKRKHEDDDDNDIM).

Belongs to the TAF9 family. In terms of assembly, binds TAF5 and TAF6. Component of TFIID and the TATA-binding protein-free TAF complex (TFTC). TFIID is composed of TATA binding protein (TBP) and a number of TBP-associated factors (TAFs). Binds N-terminal domain of p53/TP53 which is essential for transcription.

The protein resides in the nucleus. Functionally, essential for cell viability. TAF9 and TAF9B are involved in transcriptional activation as well as repression of distinct but overlapping sets of genes. May have a role in gene regulation associated with apoptosis. TAFs are components of the transcription factor IID (TFIID) complex, the TBP-free TAFII complex (TFTC), the PCAF histone acetylase complex and the STAGA transcription coactivator-HAT complex. TFIID or TFTC are essential for the regulation of RNA polymerase II-mediated transcription. The sequence is that of Transcription initiation factor TFIID subunit 9B (TAF9B) from Homo sapiens (Human).